The primary structure comprises 246 residues: Probable transcriptional regulatory protein AHA_1522 (246 aa).

It belongs to the TACO1 family.

It is found in the cytoplasm. This chain is Probable transcriptional regulatory protein AHA_1522, found in Aeromonas hydrophila subsp. hydrophila (strain ATCC 7966 / DSM 30187 / BCRC 13018 / CCUG 14551 / JCM 1027 / KCTC 2358 / NCIMB 9240 / NCTC 8049).